Consider the following 103-residue polypeptide: Large ribosomal subunit protein bL21 (103 aa).

The protein belongs to the bacterial ribosomal protein bL21 family. In terms of assembly, part of the 50S ribosomal subunit. Contacts protein L20.

Functionally, this protein binds to 23S rRNA in the presence of protein L20. The chain is Large ribosomal subunit protein bL21 from Shewanella piezotolerans (strain WP3 / JCM 13877).